We begin with the raw amino-acid sequence, 743 residues long: NAD(P)H-quinone oxidoreductase subunit 5, chloroplastic (743 aa).

The next 16 membrane-spanning stretches (helical) occupy residues 9–29 (WIIP…LLLF), 40–60 (WAFQ…NLSI), 89–109 (IDPL…MVLI), 125–145 (FAYM…SNLI), 147–167 (IYIF…FWFT), 185–205 (GDFG…SFEF), 219–239 (NEVN…GAIA), 258–278 (TPIS…FLVA), 284–304 (FIVI…TVFF), 327–347 (LGYM…FHLI), 354–374 (ALLF…VGYC), 396–416 (NSFL…CFWS), 425–445 (WLYS…TAFY), 551–571 (LFPI…GIPF), 607–627 (VFSV…YKPV), and 723–743 (YLFF…FLNL).

It belongs to the complex I subunit 5 family. NDH is composed of at least 16 different subunits, 5 of which are encoded in the nucleus.

It localises to the plastid. Its subcellular location is the chloroplast thylakoid membrane. It catalyses the reaction a plastoquinone + NADH + (n+1) H(+)(in) = a plastoquinol + NAD(+) + n H(+)(out). The catalysed reaction is a plastoquinone + NADPH + (n+1) H(+)(in) = a plastoquinol + NADP(+) + n H(+)(out). NDH shuttles electrons from NAD(P)H:plastoquinone, via FMN and iron-sulfur (Fe-S) centers, to quinones in the photosynthetic chain and possibly in a chloroplast respiratory chain. The immediate electron acceptor for the enzyme in this species is believed to be plastoquinone. Couples the redox reaction to proton translocation, and thus conserves the redox energy in a proton gradient. This is NAD(P)H-quinone oxidoreductase subunit 5, chloroplastic (ndhF) from Ambrosia trifida (Giant ragweed).